We begin with the raw amino-acid sequence, 24 residues long: Brevinin-1 (24 aa).

Cys-18 and Cys-24 are oxidised to a cystine.

Belongs to the frog skin active peptide (FSAP) family. Brevinin subfamily. As to expression, expressed by the skin glands.

Its subcellular location is the secreted. Shows antibacterial activity against representative Gram-negative and Gram-positive bacterial species, and a very high hemolytic activity. The chain is Brevinin-1 from Pelophylax porosus brevipodus (Nagoya Daruma pond frog).